The chain runs to 270 residues: Karrikin insensitive 2 receptor CA (270 aa).

Serine 95 functions as the Nucleophile in the catalytic mechanism. Catalysis depends on residues aspartate 217 and histidine 246.

This sequence belongs to the AB hydrolase superfamily. In terms of tissue distribution, expressed in stigma.

The protein localises to the nucleus. The protein resides in the cytoplasm. Functionally, hydrolase which may be involved in plant olfaction during volatile communication. The protein is Karrikin insensitive 2 receptor CA of Petunia hybrida (Petunia).